The sequence spans 474 residues: Putative response regulator NtrX-like (474 aa).

Residues 5–121 form the Response regulatory domain; the sequence is DVLIVDDEES…KLVILLTRAC (117 aa). Position 54 is a 4-aspartylphosphate (Asp-54). The Sigma-54 factor interaction domain occupies 143–368; it reads LVGECSVTLK…LRNVVEWTLI (226 aa). Residues 171–178 and 231–240 contribute to the ATP site; these read GKVGSGKE and ANNGTLYIDE.

Functionally, member of the two-component regulatory system RC0849/RC0948. The polypeptide is Putative response regulator NtrX-like (Rickettsia conorii (strain ATCC VR-613 / Malish 7)).